A 1198-amino-acid polypeptide reads, in one-letter code: Phosphatidylinositol-3,5-bisphosphate 3-phosphatase MTMR3 (1198 aa).

Residue S8 is modified to Phosphoserine. One can recognise a Myotubularin phosphatase domain in the interval E155–Y576. Positions S265 to D280 are enriched in polar residues. A disordered region spans residues S265–G285. Residues N326, N351, and I352 each coordinate a 1,2-diacyl-sn-glycero-3-phospho-(1D-myo-inositol-3,5-bisphosphate). Residues N326, N351, and I352 each coordinate a 1,2-diacyl-sn-glycero-3-phospho-(1D-myo-inositol-3-phosphate). The Phosphocysteine intermediate role is filled by C413. A 1,2-diacyl-sn-glycero-3-phospho-(1D-myo-inositol-3,5-bisphosphate) is bound by residues S414, D415, G416, W417, D418, R419, K455, and R459. Residues S414, D415, G416, W417, D418, and R419 each contribute to the a 1,2-diacyl-sn-glycero-3-phospho-(1D-myo-inositol-3-phosphate) site. R459 is an a 1,2-diacyl-sn-glycero-3-phospho-(1D-myo-inositol-3-phosphate) binding site. The interval C590–R612 is disordered. Residues Y593–P603 show a composition bias toward pro residues. Phosphoserine is present on residues S613, S633, S647, and S651. 3 disordered regions span residues L650–P669, E716–S735, and K855–E891. Positions E716–P732 are enriched in basic and acidic residues. A Phosphothreonine modification is found at T731. Residues S906 and S909 each carry the phosphoserine modification. Disordered stretches follow at residues E933–L974 and W993–G1019. Residues G999–P1010 are compositionally biased toward polar residues. Residues Q1029 to T1062 are a coiled coil. Residue S1064 is modified to Phosphoserine. The FYVE-type zinc finger occupies D1119 to H1179. Zn(2+)-binding residues include C1125, C1128, C1141, C1144, C1149, C1152, C1171, and C1174.

Belongs to the protein-tyrosine phosphatase family. Non-receptor class myotubularin subfamily. Forms heterodimers with MTMR4 that recruit both CEP55 and PLK1; occurs during early mitosis, regulates the phosphorylation of CEP55 by PLK1 and its recruitment to the midbody where it mediates cell abscission. Phosphorylated by CDK1 during mitosis.

The protein localises to the cytoplasm. It is found in the cytosol. Its subcellular location is the membrane. It carries out the reaction a 1,2-diacyl-sn-glycero-3-phospho-(1D-myo-inositol-3,5-bisphosphate) + H2O = a 1,2-diacyl-sn-glycero-3-phospho-(1D-myo-inositol-5-phosphate) + phosphate. It catalyses the reaction a 1,2-diacyl-sn-glycero-3-phospho-(1D-myo-inositol-3-phosphate) + H2O = a 1,2-diacyl-sn-glycero-3-phospho-(1D-myo-inositol) + phosphate. The enzyme catalyses 1,2-dihexadecanoyl-sn-glycero-3-phospho-(1D-myo-inositol-3-phosphate) + H2O = 1,2-dihexadecanoyl-sn-glycero-3-phospho-(1D-myo-inositol) + phosphate. The catalysed reaction is 1,2-dioctanoyl-sn-glycero-3-phospho-(1-D-myo-inositol-3-phosphate) + H2O = 1,2-dioctanoyl-sn-glycero-3-phospho-(1D-myo-inositol) + phosphate. It carries out the reaction 1,2-dihexadecanoyl-sn-glycero-3-phospho-(1D-myo-inositol-3,5-phosphate) + H2O = 1,2-dihexadecanoyl-sn-glycero-3-phospho-(1D-myo-inositol-5-phosphate) + phosphate. Lipid phosphatase that specifically dephosphorylates the D-3 position of phosphatidylinositol 3-phosphate and phosphatidylinositol 3,5-bisphosphate, generating phosphatidylinositol and phosphatidylinositol 5-phosphate. Decreases the levels of phosphatidylinositol 3-phosphate, a phospholipid found in cell membranes where it acts as key regulator of both cell signaling and intracellular membrane traffic. Could also have a molecular sequestering/adapter activity and regulate biological processes independently of its phosphatase activity. It includes the regulation of midbody abscission during mitotic cytokinesis. In Homo sapiens (Human), this protein is Phosphatidylinositol-3,5-bisphosphate 3-phosphatase MTMR3.